A 315-amino-acid polypeptide reads, in one-letter code: Borealin (315 aa).

Disordered stretches follow at residues 103-126 (IEGH…GASG) and 138-226 (LRST…TPPM). Position 146 is a phosphothreonine (Thr-146). Position 152 is a phosphoserine (Ser-152). Residues 153–162 (ARARRARRSR) are compositionally biased toward basic residues. Phosphoserine is present on Ser-163. Low complexity predominate over residues 178–188 (SISSSSSSSRN). Ser-205 carries the post-translational modification Phosphoserine. Thr-209 carries the phosphothreonine modification. Ser-218, Ser-220, and Ser-244 each carry phosphoserine.

Belongs to the borealin family. In terms of assembly, component of the CPC complex. As to expression, ubiquitously expressed in the early embryo. Expression is restricted to the ventral nerve cord and brain during later embryonic stages.

The protein localises to the nucleus. It is found in the chromosome. The protein resides in the centromere. It localises to the cytoplasm. Its subcellular location is the cytoskeleton. The protein localises to the spindle. Functionally, component of the chromosomal passenger complex (CPC), a complex that acts as a key regulator of embryonic mitosis. The CPC complex has essential functions at the centromere for ensuring sister chromatid cohesion, recruitment of the CPC to kinetochores, and chromosome alignment and segregation. There is no function in meiotic histone phosphorylation or spindle formation. This is Borealin (borr) from Drosophila melanogaster (Fruit fly).